We begin with the raw amino-acid sequence, 38 residues long: Beta-defensin 8 (38 aa).

3 disulfides stabilise this stretch: C7–C36, C14–C29, and C19–C37.

Belongs to the beta-defensin family. As to expression, neutrophilic granules.

The protein localises to the secreted. Functionally, has bactericidal activity. Active against E.coli ML35 and S.aureus 502A. The protein is Beta-defensin 8 (DEFB8) of Bos taurus (Bovine).